Reading from the N-terminus, the 318-residue chain is Ribosomal RNA small subunit methyltransferase A (318 aa).

Positions 40, 42, 67, 88, 118, and 137 each coordinate S-adenosyl-L-methionine. Over residues 296–305 (ADRGGSDREG) the composition is skewed to basic and acidic residues. Residues 296 to 318 (ADRGGSDREGTSPPTAGQGAPAC) form a disordered region.

It belongs to the class I-like SAM-binding methyltransferase superfamily. rRNA adenine N(6)-methyltransferase family. RsmA subfamily.

The protein localises to the cytoplasm. The catalysed reaction is adenosine(1518)/adenosine(1519) in 16S rRNA + 4 S-adenosyl-L-methionine = N(6)-dimethyladenosine(1518)/N(6)-dimethyladenosine(1519) in 16S rRNA + 4 S-adenosyl-L-homocysteine + 4 H(+). Its function is as follows. Specifically dimethylates two adjacent adenosines (A1518 and A1519) in the loop of a conserved hairpin near the 3'-end of 16S rRNA in the 30S particle. May play a critical role in biogenesis of 30S subunits. The sequence is that of Ribosomal RNA small subunit methyltransferase A from Mycobacterium avium (strain 104).